Here is a 455-residue protein sequence, read N- to C-terminus: Golgi pH regulator (455 aa).

Transmembrane regions (helical) follow at residues 46 to 66 (ITFAFSCTMFELIIFEILGAL), 79 to 99 (LYVILLVLIFVVPFYIGYFVV), 111 to 131 (LFACVVWFTFMYFFWKLGDPF), and 150 to 170 (VGVIGVTLMALLSGFGAVNCP). 2 N-linked (GlcNAc...) asparagine glycosylation sites follow: Asn180 and Asn243. 4 helical membrane passes run 290–310 (GYFFSIYCVWKIFMATINIVF), 343–363 (ISFILVGIIIVTSIRGLLITL), 378–398 (VIVLVLAQIMGMYFVSSVLLM), and 425–445 (WFDVIFLVSALSSILFLYLAH).

The protein belongs to the Golgi pH regulator (TC 1.A.38) family. As to quaternary structure, homotrimer.

Its subcellular location is the golgi apparatus membrane. It carries out the reaction iodide(out) = iodide(in). The enzyme catalyses chloride(in) = chloride(out). It catalyses the reaction bromide(in) = bromide(out). The catalysed reaction is fluoride(in) = fluoride(out). Voltage-gated channel that enables the transfer of anions such as iodide, chloride, bromide and fluoride which may function in counter-ion conductance and participates in Golgi acidification. In Salmo salar (Atlantic salmon), this protein is Golgi pH regulator.